A 147-amino-acid polypeptide reads, in one-letter code: uncharacterized protein (147 aa).

The next 2 membrane-spanning stretches (helical) occupy residues 35-55 (TIQL…FGNH) and 62-82 (IWLL…LFEP).

In terms of assembly, has been detected in a cytochrome bc1-aa3 supercomplex; its deletion however leaves complex activity unaffected.

It localises to the cell membrane. This is an uncharacterized protein from Corynebacterium glutamicum (strain ATCC 13032 / DSM 20300 / JCM 1318 / BCRC 11384 / CCUG 27702 / LMG 3730 / NBRC 12168 / NCIMB 10025 / NRRL B-2784 / 534).